We begin with the raw amino-acid sequence, 107 residues long: Nucleoid-associated protein MCA1327 (107 aa).

Belongs to the YbaB/EbfC family. As to quaternary structure, homodimer.

The protein localises to the cytoplasm. Its subcellular location is the nucleoid. Functionally, binds to DNA and alters its conformation. May be involved in regulation of gene expression, nucleoid organization and DNA protection. This chain is Nucleoid-associated protein MCA1327, found in Methylococcus capsulatus (strain ATCC 33009 / NCIMB 11132 / Bath).